Here is a 388-residue protein sequence, read N- to C-terminus: Chorismate synthase (388 aa).

Residues Arg-39 and Arg-45 each contribute to the NADP(+) site. FMN contacts are provided by residues 130–132 (RSS), 251–252 (NA), Gly-296, 311–315 (KPIPT), and Arg-337.

It belongs to the chorismate synthase family. As to quaternary structure, homotetramer. FMNH2 serves as cofactor.

The catalysed reaction is 5-O-(1-carboxyvinyl)-3-phosphoshikimate = chorismate + phosphate. The protein operates within metabolic intermediate biosynthesis; chorismate biosynthesis; chorismate from D-erythrose 4-phosphate and phosphoenolpyruvate: step 7/7. Functionally, catalyzes the anti-1,4-elimination of the C-3 phosphate and the C-6 proR hydrogen from 5-enolpyruvylshikimate-3-phosphate (EPSP) to yield chorismate, which is the branch point compound that serves as the starting substrate for the three terminal pathways of aromatic amino acid biosynthesis. This reaction introduces a second double bond into the aromatic ring system. The sequence is that of Chorismate synthase from Streptococcus pyogenes serotype M3 (strain SSI-1).